Consider the following 424-residue polypeptide: UPF0053 protein MG146 homolog (424 aa).

The region spanning 6 to 191 (SGGLLALIII…EQNGLFTKED (186 aa)) is the CNNM transmembrane domain. The next 4 membrane-spanning stretches (helical) occupy residues 7 to 27 (GGLL…SAVV), 71 to 91 (LITI…ILFL), 101 to 121 (AISS…LCEI), and 135 to 155 (LVYF…ITKL). 2 consecutive CBS domains span residues 210–270 (MIKW…NEPF) and 275–335 (LLYP…EHDE).

Belongs to the UPF0053 family.

The protein localises to the cell membrane. This is UPF0053 protein MG146 homolog from Mycoplasma pneumoniae (strain ATCC 29342 / M129 / Subtype 1) (Mycoplasmoides pneumoniae).